Here is a 420-residue protein sequence, read N- to C-terminus: tRNA (guanine-N(7)-)-methyltransferase non-catalytic subunit TRM82 (420 aa).

The segment covering 59–68 (KENDSKRQKS) has biased composition (basic and acidic residues). A disordered region spans residues 59 to 82 (KENDSKRQKSESGQAKVSKIPTPG). WD repeat units follow at residues 87-127 (PIYN…DNCL), 179-220 (GHVS…VIKN), 224-266 (GHHE…AKIE), and 340-379 (SYEDNVLDMCYIEATNTLISAHDSDKNQLFQQQKFDEETN).

Belongs to the WD repeat TRM82 family. In terms of assembly, forms a heterodimer with the catalytic subunit TRM8.

Its subcellular location is the nucleus. It functions in the pathway tRNA modification; N(7)-methylguanine-tRNA biosynthesis. Functionally, required for the formation of N(7)-methylguanine at position 46 (m7G46) in tRNA. In the complex, it is required to stabilize and induce conformational changes of the catalytic subunit. This Meyerozyma guilliermondii (strain ATCC 6260 / CBS 566 / DSM 6381 / JCM 1539 / NBRC 10279 / NRRL Y-324) (Yeast) protein is tRNA (guanine-N(7)-)-methyltransferase non-catalytic subunit TRM82.